Consider the following 173-residue polypeptide: CASP-like protein 2D1 (173 aa).

Topologically, residues 1 to 9 (MAPLLKLLD) are cytoplasmic. A helical membrane pass occupies residues 10–29 (SSLRVSVIPLSAATIWLTVT). Over 30 to 50 (NHQDNSSYGNLKYSNIMGLKY) the chain is Extracellular. Residue Asn34 is glycosylated (N-linked (GlcNAc...) asparagine). Residues 51–71 (MVCISAICASYAFVAAVSIWI) form a helical membrane-spanning segment. Residues 72 to 86 (KCLVNKVWLFFVSDQ) lie on the Cytoplasmic side of the membrane. A helical membrane pass occupies residues 87 to 107 (IIAYLMVTSVAAAMEILYIAY). At 108 to 131 (NGDQKVTWSEACTSYGKFCNGMKT) the chain is on the extracellular side. Residues 132-152 (ALILHALTLCFFIVLAVISAY) traverse the membrane as a helical segment. Residues 153–173 (RAFSMYQPPVSSKETVEGDAT) lie on the Cytoplasmic side of the membrane.

The protein belongs to the Casparian strip membrane proteins (CASP) family. In terms of assembly, homodimer and heterodimers.

It is found in the cell membrane. The protein is CASP-like protein 2D1 of Ricinus communis (Castor bean).